The chain runs to 290 residues: Shikimate dehydrogenase (NADP(+)) (290 aa).

Shikimate contacts are provided by residues 22–24 and threonine 68; that span reads SLS. Residue lysine 72 is the Proton acceptor of the active site. Residue aspartate 84 participates in NADP(+) binding. 2 residues coordinate shikimate: asparagine 93 and aspartate 108. NADP(+) is bound by residues 133–137 and isoleucine 228; that span reads GSGGS. Tyrosine 230 is a binding site for shikimate. Glycine 251 provides a ligand contact to NADP(+).

The protein belongs to the shikimate dehydrogenase family. As to quaternary structure, homodimer.

The catalysed reaction is shikimate + NADP(+) = 3-dehydroshikimate + NADPH + H(+). It functions in the pathway metabolic intermediate biosynthesis; chorismate biosynthesis; chorismate from D-erythrose 4-phosphate and phosphoenolpyruvate: step 4/7. In terms of biological role, involved in the biosynthesis of the chorismate, which leads to the biosynthesis of aromatic amino acids. Catalyzes the reversible NADPH linked reduction of 3-dehydroshikimate (DHSA) to yield shikimate (SA). This Leptospira interrogans serogroup Icterohaemorrhagiae serovar Lai (strain 56601) protein is Shikimate dehydrogenase (NADP(+)).